The primary structure comprises 272 residues: Magnetosome protein MamQ 1 (272 aa).

The Cytoplasmic segment spans residues 1 to 46 (MALGDANVGSAPGVDFSALQRVKQSEELLAQLYVVEETPRRLGRGP). Residues 47–67 (VHALMVISVLSVVAFIATLLM) traverse the membrane as a helical segment. Residues 68 to 272 (RYNTFVTMSE…PLNHAQDIKK (205 aa)) are Lumenal-facing.

It belongs to the LemA family.

It is found in the magnetosome membrane. Essential for magnetosome formation. Can be used to induce magnetosome formation. The polypeptide is Magnetosome protein MamQ 1 (mamQ1) (Paramagnetospirillum magneticum (strain ATCC 700264 / AMB-1) (Magnetospirillum magneticum)).